A 222-amino-acid chain; its full sequence is Interleukin-12 subunit alpha (222 aa).

A signal peptide spans 1–25 (MCPLRNLLLVATLVLLNHLDHLSLG). 3 disulfides stabilise this stretch: Cys40/Cys113, Cys67/Cys199, and Cys88/Cys126. Asn42 and Asn96 each carry an N-linked (GlcNAc...) asparagine glycan.

This sequence belongs to the IL-6 superfamily. Heterodimer with IL12B; disulfide-linked. This heterodimer is known as interleukin IL-12. Heterodimer with EBI3/IL27B; not disulfide-linked. This heterodimer is known as interleukin IL-35. Interacts with NBR1; this interaction promotes IL-12 secretion.

It localises to the secreted. In terms of biological role, heterodimerizes with IL12B to form the IL-12 cytokine or with EBI3/IL27B to form the IL-35 cytokine. IL-12 is primarily produced by professional antigen-presenting cells (APCs) such as B-cells and dendritic cells (DCs) as well as macrophages and granulocytes and regulates T-cell and natural killer-cell responses, induces the production of interferon-gamma (IFN-gamma), favors the differentiation of T-helper 1 (Th1) cells and is an important link between innate resistance and adaptive immunity. Mechanistically, exerts its biological effects through a receptor composed of IL12R1 and IL12R2 subunits. Binding to the receptor results in the rapid tyrosine phosphorylation of a number of cellular substrates including the JAK family kinases TYK2 and JAK2. In turn, recruited STAT4 gets phosphorylated and translocates to the nucleus where it regulates cytokine/growth factor responsive genes. As part of IL-35, plays essential roles in maintaining the immune homeostasis of the liver microenvironment and also functions as an immune-suppressive cytokine. Mediates biological events through unconventional receptors composed of IL12RB2 and gp130/IL6ST heterodimers or homodimers. Signaling requires the transcription factors STAT1 and STAT4, which form a unique heterodimer that binds to distinct DNA sites. The protein is Interleukin-12 subunit alpha (IL12A) of Sus scrofa (Pig).